Reading from the N-terminus, the 1513-residue chain is Exo-beta-1,6-galactobiohydrolase (1513 aa).

Positions M1–A31 are cleaved as a signal peptide. A Ricin B-type lectin domain is found at V666–R801. F5/8 type C domains follow at residues A965–T1112 and G1116–Q1273. Residues V1456 to N1480 are disordered. Over residues P1465 to N1480 the composition is skewed to polar residues. Residues V1489–L1509 form a helical membrane-spanning segment.

It belongs to the glycosyl hydrolase 30 family.

Its subcellular location is the cell membrane. It carries out the reaction Hydrolysis of (1-&gt;6)-beta-D-galactosidic linkages in arabinogalactan proteins and (1-&gt;3):(1-&gt;6)-beta-galactans to yield (1-&gt;6)-beta-galactobiose as the final product.. Involved in the type II arabinogalactan (AG) side chains degradation. Specifically releases the non-reducing terminal beta-1,6-galactobiose (beta-1,6-Gal2) from both dearabinosylated larch AG and polymeric beta-1,6-galactan chains by an exo-mode of action. Shows lower activity with larch AG, and very weak activity with dearabinosylated gum arabic, gum arabic and potato galactan. Can probably release beta-1,6-Gal2 from the internal side chains of type II AG. This is Exo-beta-1,6-galactobiohydrolase from Bifidobacterium longum subsp. longum (strain ATCC 15707 / DSM 20219 / JCM 1217 / NCTC 11818 / E194b).